Reading from the N-terminus, the 135-residue chain is Basic phospholipase A2 KBf-VA (135 aa).

7 disulfides stabilise this stretch: cysteine 28–cysteine 87, cysteine 42–cysteine 134, cysteine 44–cysteine 60, cysteine 59–cysteine 115, cysteine 66–cysteine 108, cysteine 76–cysteine 101, and cysteine 94–cysteine 106. The Ca(2+) site is built by tyrosine 43, glycine 45, and glycine 47. Histidine 63 is a catalytic residue. Residue aspartate 64 participates in Ca(2+) binding. The active site involves aspartate 109.

The protein belongs to the phospholipase A2 family. Group I subfamily. D49 sub-subfamily. Ca(2+) is required as a cofactor. In terms of tissue distribution, expressed by the venom gland.

It is found in the secreted. The enzyme catalyses a 1,2-diacyl-sn-glycero-3-phosphocholine + H2O = a 1-acyl-sn-glycero-3-phosphocholine + a fatty acid + H(+). Snake venom phospholipase A2 (PLA2) that inhibits neuromuscular transmission by blocking acetylcholine release from the nerve termini. PLA2 catalyzes the calcium-dependent hydrolysis of the 2-acyl groups in 3-sn-phosphoglycerides. This is Basic phospholipase A2 KBf-VA from Bungarus fasciatus (Banded krait).